The following is a 65-amino-acid chain: Large ribosomal subunit protein bL35 (65 aa).

This sequence belongs to the bacterial ribosomal protein bL35 family.

The protein is Large ribosomal subunit protein bL35 of Ruminiclostridium cellulolyticum (strain ATCC 35319 / DSM 5812 / JCM 6584 / H10) (Clostridium cellulolyticum).